A 1124-amino-acid chain; its full sequence is Phytochrome type A (1124 aa).

Positions 1 to 19 (MSTTRPSQSSNNSGRSRNS) are enriched in low complexity. Residues 1-21 (MSTTRPSQSSNNSGRSRNSAR) form a disordered region. The region spanning 218-401 (SMERLCDTMV…VFAIHVNKEI (184 aa)) is the GAF domain. Residue Cys323 participates in phytochromobilin binding. PAS domains lie at 617–687 (VTSE…LQGE) and 750–821 (DYKA…VNFG). The region spanning 901–1120 (YMKRQIRNPL…ILSVELAAAH (220 aa)) is the Histidine kinase domain.

It belongs to the phytochrome family. Homodimer. In terms of processing, contains one covalently linked phytochromobilin chromophore.

Functionally, regulatory photoreceptor which exists in two forms that are reversibly interconvertible by light: the Pr form that absorbs maximally in the red region of the spectrum and the Pfr form that absorbs maximally in the far-red region. Photoconversion of Pr to Pfr induces an array of morphogenic responses, whereas reconversion of Pfr to Pr cancels the induction of those responses. Pfr controls the expression of a number of nuclear genes including those encoding the small subunit of ribulose-bisphosphate carboxylase, chlorophyll A/B binding protein, protochlorophyllide reductase, rRNA, etc. It also controls the expression of its own gene(s) in a negative feedback fashion. The sequence is that of Phytochrome type A (PHYA) from Lathyrus sativus (White vetchling).